Consider the following 1226-residue polypeptide: Chromosome-associated kinesin KIF4 (1226 aa).

The 330-residue stretch at 8–337 (PVRVALRCRP…LRYADRARKI (330 aa)) folds into the Kinesin motor domain. Residue 87–94 (GQTGSGKT) coordinates ATP. Residues 351–1006 (ELQRLKLQVQ…YKQKLALLHV (656 aa)) adopt a coiled-coil conformation. Residues 494-505 (EAASFPVPEEDS) show a composition bias toward acidic residues. 3 disordered regions span residues 494–516 (EAAS…GFTT), 722–741 (QRQK…GMEG), and 1052–1078 (DLLS…KQSK). A compositionally biased stretch (basic and acidic residues) spans 722–735 (QRQKEAMEKRKDSQ). Positions 1007-1226 (ASGKKLHNIL…SGCSAITEDE (220 aa)) are globular. Positions 1053 to 1064 (LLSESESEEESD) are enriched in acidic residues.

The protein belongs to the TRAFAC class myosin-kinesin ATPase superfamily. Kinesin family. Chromokinesin subfamily. The cofactor is [2Fe-2S] cluster. [4Fe-4S] cluster is required as a cofactor. Expressed in oocytes, eggs, testes and brain.

The protein resides in the nucleus. The protein localises to the chromosome. It localises to the cytoplasm. It is found in the cytoskeleton. Functionally, iron-sulfur (Fe-S) cluster binding motor protein that has a role in chromosome segregation during mitosis. Required for mitotic chromosomal positioning and bipolar spindle stabilization. The polypeptide is Chromosome-associated kinesin KIF4 (kif4) (Xenopus laevis (African clawed frog)).